Consider the following 226-residue polypeptide: MKVTFLGHAVVLIEGKKNIIIDPFISGNPVCPVKLEGLPKIDYILVTHGHGDHLGDAVEIAKKNDATVISNYEICHYLGKKGVKTHAMHIGGSYLFDFGRVKMTPAVHGSGILDGDSMIYGGNPSGFLITIEGKKIYHAGDTGLTREMELLAEENVDVAFLPIGGNFVMDVEDAVRAAVMIKPKKVVPMHYGTWELIFADVELFKKKVEEKGVECVILEPGESLEL.

It belongs to the UPF0173 family.

The chain is UPF0173 metal-dependent hydrolase TM_1162 from Thermotoga maritima (strain ATCC 43589 / DSM 3109 / JCM 10099 / NBRC 100826 / MSB8).